The chain runs to 935 residues: Formin-I (935 aa).

Residues 35-76 are a coiled coil; that stretch reads QQQQQQQQQQINNENENSINNQENKENNNKDNNNNNNKEIKQ. Disordered stretches follow at residues 52–78, 380–511, and 561–590; these read SINNQENKENNNKDNNNNNNKEIKQSS, LSSA…QLTP, and KEKMSKENLNNSNNNNNNNSNNNGEEQSLS. Residues 384–407 show a composition bias toward low complexity; that stretch reads KKQPQQQPQKDVTSSSSSSSNSSS. Residues 418–428 show a composition bias toward polar residues; it reads ITTNDSSSSNP. The segment covering 431-443 has biased composition (basic and acidic residues); the sequence is DFDKLSLSSDDKV. Polar residues predominate over residues 444–454; that stretch reads NNNNVQIENTT. An FH1 domain is found at 444-505; sequence NNNNVQIENT…KPNNSGGGGG (62 aa). The segment covering 456–482 has biased composition (pro residues); it reads SVPPPPPVGAPPPPPPPPPPPPPPPPS. A compositionally biased stretch (polar residues) spans 484–499; that stretch reads LKLNRNRISTPKKPNN. The 430-residue stretch at 506-935 folds into the FH2 domain; the sequence is GGQLTPLQKK…SLNLSTLNSK (430 aa). Low complexity predominate over residues 568 to 583; that stretch reads NLNNSNNNNNNNSNNN. 2 coiled-coil regions span residues 702–730 and 803–834; these read SLLDSIEINNNQLSKAIEQLRNSRKFIKV and QSSLENILEESNEIENKFKQVDQEIQYHQQLL.

This sequence belongs to the formin homology family. Diaphanous subfamily.

In terms of biological role, formins play an important role in the nucleation of actin and the formation of linear actin filaments. The chain is Formin-I (forI) from Dictyostelium discoideum (Social amoeba).